Reading from the N-terminus, the 217-residue chain is MASLFSGRILIRNNSDQDEVETEAELSRRLENRLVLLFFGAGACPQCQAFAPVLKDFFVRLTDEFYVLRAAQLALVYVSQDPTEEQQDLFLRDMPEKWLFLPFHDELRRDLGRQFSVRQLPAVVVLKPGGDVLTSDATEEIQRLGPACFANWQEAAELLDRSFLQPEDLDEPARRSITEPLRRRKYRVDRDVGRERGRNGRDSGDPQGDAGTRAELW.

In terms of domain architecture, Thioredoxin spans 1 to 164; the sequence is MASLFSGRIL…AAELLDRSFL (164 aa). Over residues 188 to 204 the composition is skewed to basic and acidic residues; sequence VDRDVGRERGRNGRDSG. Positions 188 to 217 are disordered; it reads VDRDVGRERGRNGRDSGDPQGDAGTRAELW.

It belongs to the nucleoredoxin family. In terms of assembly, interacts with isoform 1 of BSG. As to expression, expressed in the retina (at protein level). Expressed predominantly by photoreceptors in both the inner and outer nuclear layer (at protein level). Not expressed in the testis, spleen, intestine, lung, cerebellum, or kidney.

The protein localises to the cell projection. It localises to the cilium. Its subcellular location is the photoreceptor outer segment. In terms of biological role, plays an important role in retinal cone photoreceptor survival. In association with glucose transporter SLC16A1/GLUT1 and BSG, promotes retinal cone survival by enhancing aerobic glycolysis and accelerating the entry of glucose into photoreceptors. May play a role in cone cell viability, slowing down cone degeneration, does not seem to play a role in degenerating rods. This chain is Nucleoredoxin-like protein 1 (Nxnl1), found in Mus musculus (Mouse).